The following is a 255-amino-acid chain: Triosephosphate isomerase (255 aa).

Position 15-17 (15-17 (NWK)) interacts with substrate. H100 (electrophile) is an active-site residue. E172 acts as the Proton acceptor in catalysis. Substrate is bound by residues G178, S218, and 239-240 (GG).

This sequence belongs to the triosephosphate isomerase family. As to quaternary structure, homodimer.

The protein localises to the cytoplasm. The enzyme catalyses D-glyceraldehyde 3-phosphate = dihydroxyacetone phosphate. The protein operates within carbohydrate biosynthesis; gluconeogenesis. It participates in carbohydrate degradation; glycolysis; D-glyceraldehyde 3-phosphate from glycerone phosphate: step 1/1. Its function is as follows. Involved in the gluconeogenesis. Catalyzes stereospecifically the conversion of dihydroxyacetone phosphate (DHAP) to D-glyceraldehyde-3-phosphate (G3P). This is Triosephosphate isomerase from Clostridium tetani (strain Massachusetts / E88).